A 410-amino-acid polypeptide reads, in one-letter code: Phospho-N-acetylmuramoyl-pentapeptide-transferase (410 aa).

Helical transmembrane passes span 27–47, 77–97, 99–119, 140–160, 213–233, 248–268, 288–308, 312–332, 337–357, and 389–409; these read RMILAAITSLLLSIFLGPYFI, TPTMGGILILSSMLVSLVLWM, LTHIFTLILFVTTVFLGLIGG, LFFQFVLSAAIASYFLLSSVN, PVVTFGGISLILMAFFIFFVI, GLLAGCLVTAAGSLCLIAFVS, IAIYLCALIGASLGFLWYNGY, VFMGDTGSLTLGGILGVSAVL, FLLGIVGGIFVAEALSVILQV, and VIRFWIMSLLFAIIGIASLKF.

This sequence belongs to the glycosyltransferase 4 family. MraY subfamily. It depends on Mg(2+) as a cofactor.

The protein resides in the cell inner membrane. The enzyme catalyses UDP-N-acetyl-alpha-D-muramoyl-L-alanyl-gamma-D-glutamyl-meso-2,6-diaminopimeloyl-D-alanyl-D-alanine + di-trans,octa-cis-undecaprenyl phosphate = di-trans,octa-cis-undecaprenyl diphospho-N-acetyl-alpha-D-muramoyl-L-alanyl-D-glutamyl-meso-2,6-diaminopimeloyl-D-alanyl-D-alanine + UMP. The protein operates within cell wall biogenesis; peptidoglycan biosynthesis. Functionally, catalyzes the initial step of the lipid cycle reactions in the biosynthesis of the cell wall peptidoglycan: transfers peptidoglycan precursor phospho-MurNAc-pentapeptide from UDP-MurNAc-pentapeptide onto the lipid carrier undecaprenyl phosphate, yielding undecaprenyl-pyrophosphoryl-MurNAc-pentapeptide, known as lipid I. This Protochlamydia amoebophila (strain UWE25) protein is Phospho-N-acetylmuramoyl-pentapeptide-transferase.